Consider the following 94-residue polypeptide: PqqA binding protein (94 aa).

Belongs to the PqqD family. As to quaternary structure, monomer. Interacts with PqqE.

It functions in the pathway cofactor biosynthesis; pyrroloquinoline quinone biosynthesis. Functions as a PqqA binding protein and presents PqqA to PqqE, in the pyrroloquinoline quinone (PQQ) biosynthetic pathway. The sequence is that of PqqA binding protein from Pseudomonas savastanoi pv. phaseolicola (strain 1448A / Race 6) (Pseudomonas syringae pv. phaseolicola (strain 1448A / Race 6)).